We begin with the raw amino-acid sequence, 352 residues long: MLELNFSQTLGNHCLTINETLPANGITAIFGVSGAGKTSLINAISGLTRPQKGRIVLNGRVLNDAEKGICLTPEKRRVGYVFQDARLFPHYKVRGNLRYGMAKSMVDQFDKLVALLGIEPLLDRLPGSLSGGEKQRVAIGRALLTAPELLLLDEPLASLDIPRKRELLPYLQRLTREINIPMLYVSHSLDEILHLADRVMVLENGQVKAFGALEEVWGSSVMNPWLPKEQQSSILKVTVLEHHPHYAMTALALGDQHLWVNKLDEPLQAALRIRIQASDVSLVLQPPQQTSIRNVLRAKVVNSYDDNGQVEVELEVGGKTLWARISPWARDELAIKPGLWLYAQIKSVSITA.

An ABC transporter domain is found at 1–229 (MLELNFSQTL…SVMNPWLPKE (229 aa)). 31–38 (GVSGAGKT) contributes to the ATP binding site. The region spanning 289–352 (QTSIRNVLRA…AQIKSVSITA (64 aa)) is the Mop domain.

It belongs to the ABC transporter superfamily. Molybdate importer (TC 3.A.1.8) family. As to quaternary structure, the complex is composed of two ATP-binding proteins (ModC), two transmembrane proteins (ModB) and a solute-binding protein (ModA).

It is found in the cell inner membrane. The catalysed reaction is molybdate(out) + ATP + H2O = molybdate(in) + ADP + phosphate + H(+). Its function is as follows. Part of the ABC transporter complex ModABC involved in molybdenum import. Responsible for energy coupling to the transport system. The protein is Molybdenum import ATP-binding protein ModC of Shigella boydii serotype 4 (strain Sb227).